Here is a 226-residue protein sequence, read N- to C-terminus: Cytidylate kinase (226 aa).

14-22 (GPAGAGKST) provides a ligand contact to ATP.

It belongs to the cytidylate kinase family. Type 1 subfamily.

Its subcellular location is the cytoplasm. It catalyses the reaction CMP + ATP = CDP + ADP. The catalysed reaction is dCMP + ATP = dCDP + ADP. This Symbiobacterium thermophilum (strain DSM 24528 / JCM 14929 / IAM 14863 / T) protein is Cytidylate kinase.